Here is a 560-residue protein sequence, read N- to C-terminus: 2-isopropylmalate synthase (560 aa).

The Pyruvate carboxyltransferase domain maps to 30–303 (PVWCSVDLRD…DPEIDCSNIE (274 aa)). Mg(2+) is bound by residues Asp-39, His-242, His-244, and Asn-278. Residues 437 to 560 (QPEGRLRFVD…RVLDVKAGKA (124 aa)) form a regulatory domain region.

Belongs to the alpha-IPM synthase/homocitrate synthase family. LeuA type 2 subfamily. In terms of assembly, homodimer. Mg(2+) is required as a cofactor.

It localises to the cytoplasm. It catalyses the reaction 3-methyl-2-oxobutanoate + acetyl-CoA + H2O = (2S)-2-isopropylmalate + CoA + H(+). Its pathway is amino-acid biosynthesis; L-leucine biosynthesis; L-leucine from 3-methyl-2-oxobutanoate: step 1/4. In terms of biological role, catalyzes the condensation of the acetyl group of acetyl-CoA with 3-methyl-2-oxobutanoate (2-ketoisovalerate) to form 3-carboxy-3-hydroxy-4-methylpentanoate (2-isopropylmalate). The chain is 2-isopropylmalate synthase from Rhizobium johnstonii (strain DSM 114642 / LMG 32736 / 3841) (Rhizobium leguminosarum bv. viciae).